The sequence spans 310 residues: MATVQLSTQFSCQTRVSISPNSKSISKPPFLVPVTSIIHRPMISTGGIAVSPRRVFKVRATDTGEIGSALLAAEEAIEDVEETERLKRSLVDSLYGTDRGLSASSETRAEIGDLITQLESKNPTPAPTEALFLLNGKWILAYTSFVNLFPLLSRGIVPLIKVDEISQTIDSDNFTVQNSVRFAGPLGTNSISTNAKFEIRSPKRVQIKFEQGVIGTPQLTDSIEIPEYVEVLGQKIDLNPIRGLLTSVQDTASSVARTISSQPPLKFSLPADNAQSWLLTTYLDKDIRISRGDGGSVFVLIKEGSPLLNP.

The N-terminal 59 residues, 1–59 (MATVQLSTQFSCQTRVSISPNSKSISKPPFLVPVTSIIHRPMISTGGIAVSPRRVFKVR), are a transit peptide targeting the chloroplast. A Phosphothreonine modification is found at Thr61. Residues 65 to 94 (EIGSALLAAEEAIEDVEETERLKRSLVDSL) are a coiled coil.

The protein belongs to the PAP/fibrillin family.

The protein resides in the plastid. It is found in the chloroplast. The protein localises to the plastoglobule. Its function is as follows. Probably involved in light/cold stress-related jasmonate (JA) biosynthesis. The sequence is that of Probable plastid-lipid-associated protein 2, chloroplastic (PAP2) from Arabidopsis thaliana (Mouse-ear cress).